A 214-amino-acid chain; its full sequence is Pyrophosphatase PpaX (214 aa).

Aspartate 9 acts as the Nucleophile in catalysis.

The protein belongs to the HAD-like hydrolase superfamily. PpaX family. Requires Mg(2+) as cofactor.

It catalyses the reaction diphosphate + H2O = 2 phosphate + H(+). Functionally, hydrolyzes pyrophosphate formed during P-Ser-HPr dephosphorylation by HPrK/P. Might play a role in controlling the intracellular pyrophosphate pool. This chain is Pyrophosphatase PpaX, found in Oceanobacillus iheyensis (strain DSM 14371 / CIP 107618 / JCM 11309 / KCTC 3954 / HTE831).